We begin with the raw amino-acid sequence, 136 residues long: Nucleoside diphosphate kinase (136 aa).

6 residues coordinate ATP: Lys-10, Phe-58, Arg-86, Thr-92, Arg-104, and Asn-114. His-117 acts as the Pros-phosphohistidine intermediate in catalysis.

Belongs to the NDK family. Homohexamer. Mg(2+) is required as a cofactor.

The protein resides in the cytoplasm. It carries out the reaction a 2'-deoxyribonucleoside 5'-diphosphate + ATP = a 2'-deoxyribonucleoside 5'-triphosphate + ADP. It catalyses the reaction a ribonucleoside 5'-diphosphate + ATP = a ribonucleoside 5'-triphosphate + ADP. Major role in the synthesis of nucleoside triphosphates other than ATP. The ATP gamma phosphate is transferred to the NDP beta phosphate via a ping-pong mechanism, using a phosphorylated active-site intermediate. The sequence is that of Nucleoside diphosphate kinase from Mycobacterium bovis (strain ATCC BAA-935 / AF2122/97).